The sequence spans 2386 residues: Protein kinase rad3 (2386 aa).

One can recognise an FAT domain in the interval 1386-1943; that stretch reads TLGIVSLNCG…LWQLMATIKS (558 aa). The region spanning 2052 to 2370 is the PI3K/PI4K catalytic domain; sequence FEDEVDIMNS…QIQELIKSAV (319 aa). The segment at 2058–2064 is G-loop; sequence IMNSLQK. The interval 2227–2235 is catalytic loop; the sequence is GLGDRHGEN. The tract at residues 2247-2271 is activation loop; sequence HVDFNCLFDKGLTFEKPEKVPFRLT. One can recognise an FATC domain in the interval 2354-2386; that stretch reads IPLSIEGQIQELIKSAVNPKNLVEMYIGWAAYF.

Belongs to the PI3/PI4-kinase family. ATM subfamily. Interacts with crb2 (via BRCT domain). Interacts with chk1.

It is found in the nucleus. The enzyme catalyses L-seryl-[protein] + ATP = O-phospho-L-seryl-[protein] + ADP + H(+). It catalyses the reaction L-threonyl-[protein] + ATP = O-phospho-L-threonyl-[protein] + ADP + H(+). In terms of biological role, serine/threonine kinase which activates checkpoint signaling upon genotoxic stresses. Involved in G2 arrest following DNA damage where it phosphorylates chk1. Phosphorylation of 'Thr-73' and 'Ser-80' of checkpoint mediator crb2 promotes its interaction with chk1. It is also involved in the dependence of mitosis on the completion of DNA replication. In Schizosaccharomyces pombe (strain 972 / ATCC 24843) (Fission yeast), this protein is Protein kinase rad3 (rad3).